The primary structure comprises 431 residues: COBRA-like protein 4 (431 aa).

Residues 1–20 form the signal peptide; sequence MRLLFSFCFFFFMIIFTATA. N-linked (GlcNAc...) asparagine glycans are attached at residues Asn-29, Asn-154, Asn-162, Asn-201, Asn-226, Asn-306, Asn-321, and Asn-340. Asn-414 carries GPI-anchor amidated asparagine lipidation. The propeptide at 415-431 is removed in mature form; sequence FASFSLTILLLLFISIW.

The protein belongs to the COBRA family. In terms of tissue distribution, expressed in roots, stems, leaves, flowers and siliques.

The protein localises to the cell membrane. The sequence is that of COBRA-like protein 4 (COBL4) from Arabidopsis thaliana (Mouse-ear cress).